We begin with the raw amino-acid sequence, 130 residues long: UPF0102 protein RPE_0358 (130 aa).

This sequence belongs to the UPF0102 family.

In Rhodopseudomonas palustris (strain BisA53), this protein is UPF0102 protein RPE_0358.